The following is a 675-amino-acid chain: Rho GTPase-activating protein 40 (675 aa).

Disordered stretches follow at residues 95–118 (RDELREEDSGGNEGQLPEEGEAES) and 187–218 (KMSSENGDSGMKGAQLSSGASKFPPAAEPGGL). Residues 103 to 116 (SGGNEGQLPEEGEA) are compositionally biased toward acidic residues. The region spanning 323–522 (VPLDSLLEAD…IMVHYQDLLW (200 aa)) is the Rho-GAP domain.

In terms of biological role, GTPase activator for the Rho-type GTPases by converting them to an inactive GDP-bound state. The polypeptide is Rho GTPase-activating protein 40 (Homo sapiens (Human)).